The sequence spans 402 residues: Phosphoribulokinase, chloroplastic (402 aa).

The transit peptide at 1 to 51 directs the protein to the chloroplast; it reads MAVCTVYTIPTTTHLGSSFNQNNKQVFFNYKRSSSSNNTLFTTRPSYVITC. The cysteines at positions 67 and 106 are disulfide-linked.

This sequence belongs to the phosphoribulokinase family.

It is found in the plastid. Its subcellular location is the chloroplast. It catalyses the reaction D-ribulose 5-phosphate + ATP = D-ribulose 1,5-bisphosphate + ADP + H(+). It functions in the pathway carbohydrate biosynthesis; Calvin cycle. Its activity is regulated as follows. Light regulated via thioredoxin by reversible oxidation/reduction of sulfhydryl/disulfide groups. The sequence is that of Phosphoribulokinase, chloroplastic from Spinacia oleracea (Spinach).